The primary structure comprises 455 residues: Phosphoglucosamine mutase (455 aa).

Residue serine 108 is the Phosphoserine intermediate of the active site. 4 residues coordinate Mg(2+): serine 108, aspartate 246, aspartate 248, and aspartate 250. Position 108 is a phosphoserine (serine 108).

It belongs to the phosphohexose mutase family. Mg(2+) serves as cofactor. In terms of processing, activated by phosphorylation.

The enzyme catalyses alpha-D-glucosamine 1-phosphate = D-glucosamine 6-phosphate. In terms of biological role, catalyzes the conversion of glucosamine-6-phosphate to glucosamine-1-phosphate. The chain is Phosphoglucosamine mutase from Frankia alni (strain DSM 45986 / CECT 9034 / ACN14a).